The following is a 529-amino-acid chain: Probable feruloyl esterase B-1 (529 aa).

Residues 1–19 (MKISYFFVASLSYVSVARA) form the signal peptide. Disulfide bonds link Cys-27–Cys-75 and Cys-63–Cys-114. N-linked (GlcNAc...) asparagine glycans are attached at residues Asn-53, Asn-64, Asn-85, Asn-98, and Asn-138. 4 disulfide bridges follow: Cys-187–Cys-445, Cys-256–Cys-273, Cys-282–Cys-295, and Cys-505–Cys-527. Residue Ser-188 is the Acyl-ester intermediate of the active site. Asn-233 carries an N-linked (GlcNAc...) asparagine glycan. Residues Asp-257, Asp-260, Ala-262, Asp-264, and Leu-266 each contribute to the Ca(2+) site. 3 N-linked (GlcNAc...) asparagine glycosylation sites follow: Asn-286, Asn-290, and Asn-354. Residues Asp-404 and His-444 each act as charge relay system in the active site.

Belongs to the tannase family.

Its subcellular location is the secreted. It carries out the reaction feruloyl-polysaccharide + H2O = ferulate + polysaccharide.. Functionally, involved in degradation of plant cell walls. Hydrolyzes the feruloyl-arabinose ester bond in arabinoxylans as well as the feruloyl-galactose and feruloyl-arabinose ester bonds in pectin. In Aspergillus terreus (strain NIH 2624 / FGSC A1156), this protein is Probable feruloyl esterase B-1 (faeB-1).